We begin with the raw amino-acid sequence, 383 residues long: Probable cytosolic iron-sulfur protein assembly protein 1 (383 aa).

WD repeat units follow at residues 10–49 (AHND…KFPL), 56–108 (THKR…VEYD), 135–175 (GHEN…EEFE), 182–221 (DHSQ…DEWS), 228–275 (GHEG…EDDE), 302–341 (VHKY…KWVI), and 349–383 (HGVH…LWKI).

This sequence belongs to the WD repeat CIA1 family. Interacts with NAR1.

The protein resides in the cytoplasm. It is found in the nucleus. Its function is as follows. Essential component of the cytosolic iron-sulfur (Fe/S) protein assembly machinery. Required for the maturation of extramitochondrial Fe/S proteins. In Candida albicans (strain SC5314 / ATCC MYA-2876) (Yeast), this protein is Probable cytosolic iron-sulfur protein assembly protein 1.